Reading from the N-terminus, the 129-residue chain is Glycine cleavage system H protein (129 aa).

One can recognise a Lipoyl-binding domain in the interval 24–106; the sequence is IAVIGISAYA…YEQGWLLKVQ (83 aa). K65 is modified (N6-lipoyllysine).

Belongs to the GcvH family. In terms of assembly, the glycine cleavage system is composed of four proteins: P, T, L and H. It depends on (R)-lipoate as a cofactor.

In terms of biological role, the glycine cleavage system catalyzes the degradation of glycine. The H protein shuttles the methylamine group of glycine from the P protein to the T protein. This is Glycine cleavage system H protein from Synechococcus elongatus (strain ATCC 33912 / PCC 7942 / FACHB-805) (Anacystis nidulans R2).